The following is a 1005-amino-acid chain: Translocated actin-recruiting phosphoprotein (1005 aa).

Polar residues predominate over residues 1–10 (MTNSISGDQP). Disordered regions lie at residues 1 to 36 (MTNS…SVST), 74 to 128 (PTVT…DYEP), 191 to 214 (SIDD…NSLR), 343 to 365 (SIDD…LNSL), 611 to 645 (WGTQ…TPSS), 661 to 748 (NIRD…DGPA), and 792 to 847 (TGTS…TSLM). Low complexity-rich tracts occupy residues 11–36 (TVTT…SVST) and 74–121 (PTVT…SSDH). 2 stretches are compositionally biased toward polar residues: residues 191–205 (SIDD…NTSG) and 343–357 (SIDD…NTSG). Low complexity-rich tracts occupy residues 661–700 (NIRD…TDDI), 715–734 (GDIS…VSSS), and 831–846 (STTT…TTSL).

Belongs to the chlamydial CPn_0572/CT_456/TC_0741 family. In terms of processing, phosphorylated on a tyrosine on attachment to the host cell. Tyrosine phosphorylation is temporally and spatially associated with recruitment of actin to the site of chlamydial entry. Phosphorylated Tarp seems to remain cytoplasmically exposed on the inclusion membrane at one side of internalized elementary bodies for several hours after entry.

Its subcellular location is the secreted. Its function is as follows. Appears to initiate or participate in signaling events that regulate the actin recruitment, which ultimately leads to internalization. The polypeptide is Translocated actin-recruiting phosphoprotein (tarP) (Chlamydia trachomatis serovar L2 (strain ATCC VR-902B / DSM 19102 / 434/Bu)).